A 119-amino-acid chain; its full sequence is Non-structural protein 3b (119 aa).

The DRBM domain maps to 3-79; it reads YVSLLNQVWQ…AARKVCLRLQ (77 aa).

In terms of assembly, interacts with host RUNX1 isoform b.

The protein resides in the host nucleus. It localises to the host nucleolus. The protein localises to the host mitochondrion. Functionally, induces host cell G0/G1 arrest and apoptosis. In Pipistrellus abramus (Japanese pipistrelle), this protein is Non-structural protein 3b.